An 87-amino-acid chain; its full sequence is U3-theraphotoxin-Hhn1a 10 (87 aa).

An N-terminal signal peptide occupies residues M1–A24. A propeptide spanning residues S25–R52 is cleaved from the precursor. Intrachain disulfides connect C54/C67, C61/C72, and C66/C79.

It belongs to the neurotoxin 10 (Hwtx-1) family. 51 (Hntx-8) subfamily. Hntx-8 sub-subfamily. Expressed by the venom gland.

It localises to the secreted. Its function is as follows. Ion channel inhibitor. In Cyriopagopus hainanus (Chinese bird spider), this protein is U3-theraphotoxin-Hhn1a 10.